Reading from the N-terminus, the 212-residue chain is Large ribosomal subunit protein uL3 (212 aa).

The tract at residues 127 to 161 (NFKRGPMAHGSKNHRLPGSTGAGTTPGRVFPGKRM) is disordered.

The protein belongs to the universal ribosomal protein uL3 family. Part of the 50S ribosomal subunit. Forms a cluster with proteins L14 and L19.

Its function is as follows. One of the primary rRNA binding proteins, it binds directly near the 3'-end of the 23S rRNA, where it nucleates assembly of the 50S subunit. In Thermosynechococcus vestitus (strain NIES-2133 / IAM M-273 / BP-1), this protein is Large ribosomal subunit protein uL3.